A 33-amino-acid chain; its full sequence is Pardaxin P-1 (33 aa).

It belongs to the pardaxin family. In aqueous solution exists as a tetramer.

The protein resides in the secreted. It is found in the target cell membrane. Its function is as follows. Exhibits unusual shark repellent and surfactant properties. Forms voltage-dependent, ion-permeable channels in membranes. At high concentration causes cell membrane lysis. Causes death in killfish oryzias latipes in 30 minutes at a concentration of 25 micrograms/ml. This is Pardaxin P-1 from Pardachirus pavoninus (Peacock sole).